The chain runs to 344 residues: Glycerol-3-phosphate dehydrogenase [NAD(P)+] (344 aa).

NADPH-binding residues include Ser11, Trp12, His32, Arg33, and Lys105. Sn-glycerol 3-phosphate is bound by residues Lys105, Gly135, and Ser137. Ala139 lines the NADPH pocket. Sn-glycerol 3-phosphate contacts are provided by Lys190, Asp243, Ser253, Arg254, and Asn255. Catalysis depends on Lys190, which acts as the Proton acceptor. Arg254 provides a ligand contact to NADPH. 2 residues coordinate NADPH: Val278 and Glu280.

It belongs to the NAD-dependent glycerol-3-phosphate dehydrogenase family.

The protein resides in the cytoplasm. The catalysed reaction is sn-glycerol 3-phosphate + NAD(+) = dihydroxyacetone phosphate + NADH + H(+). It catalyses the reaction sn-glycerol 3-phosphate + NADP(+) = dihydroxyacetone phosphate + NADPH + H(+). It participates in membrane lipid metabolism; glycerophospholipid metabolism. Functionally, catalyzes the reduction of the glycolytic intermediate dihydroxyacetone phosphate (DHAP) to sn-glycerol 3-phosphate (G3P), the key precursor for phospholipid synthesis. This Oceanobacillus iheyensis (strain DSM 14371 / CIP 107618 / JCM 11309 / KCTC 3954 / HTE831) protein is Glycerol-3-phosphate dehydrogenase [NAD(P)+].